A 325-amino-acid chain; its full sequence is GTP 3',8-cyclase (325 aa).

Residues 4–219 (TYQREINYLR…DAISAKLGPL (216 aa)) enclose the Radical SAM core domain. Residue arginine 13 coordinates GTP. Cysteine 20 and cysteine 24 together coordinate [4Fe-4S] cluster. S-adenosyl-L-methionine is bound at residue tyrosine 26. Cysteine 27 is a [4Fe-4S] cluster binding site. Arginine 63 lines the GTP pocket. Glycine 67 serves as a coordination point for S-adenosyl-L-methionine. Threonine 94 is a GTP binding site. S-adenosyl-L-methionine is bound at residue serine 118. Residue lysine 155 participates in GTP binding. Methionine 189 serves as a coordination point for S-adenosyl-L-methionine. [4Fe-4S] cluster contacts are provided by cysteine 254 and cysteine 257. 259-261 (RLR) contributes to the GTP binding site. Cysteine 271 is a binding site for [4Fe-4S] cluster.

It belongs to the radical SAM superfamily. MoaA family. In terms of assembly, monomer and homodimer. [4Fe-4S] cluster serves as cofactor.

The enzyme catalyses GTP + AH2 + S-adenosyl-L-methionine = (8S)-3',8-cyclo-7,8-dihydroguanosine 5'-triphosphate + 5'-deoxyadenosine + L-methionine + A + H(+). It functions in the pathway cofactor biosynthesis; molybdopterin biosynthesis. Functionally, catalyzes the cyclization of GTP to (8S)-3',8-cyclo-7,8-dihydroguanosine 5'-triphosphate. This Pelotomaculum thermopropionicum (strain DSM 13744 / JCM 10971 / SI) protein is GTP 3',8-cyclase.